A 156-amino-acid polypeptide reads, in one-letter code: uncharacterized protein (156 aa).

Residue H55 is part of the active site.

It belongs to the thioester dehydratase family. FabZ subfamily.

This is an uncharacterized protein from Halalkalibacterium halodurans (strain ATCC BAA-125 / DSM 18197 / FERM 7344 / JCM 9153 / C-125) (Bacillus halodurans).